The chain runs to 68 residues: Large ribosomal subunit protein bL35 (68 aa).

Belongs to the bacterial ribosomal protein bL35 family.

The protein is Large ribosomal subunit protein bL35 of Wolbachia pipientis wMel.